The following is a 1062-amino-acid chain: MNRFTAYAALFFMFSLCSTAKEAGFLHPAFNFRGTSTMSASSGDYSAAPTPLYKSWALPSSLNLTTQPPPPLTDRSYYELVQALTSKMRLDCQTVGDMTWRHLSEMLFASWNSVKEVSLKAASVTLWAIINIWFGLYWTLARLITLFLWTFSIEALCLILLGCITSLIYKGALSLSEHLPVFLFMSPLKIIWRAAFSKRNYKNERAVEGYKGFSVPQKPPKSAVIELQHENGSHLGYANCIRLYSGENALVTAEHCLEGAFATSLKTGNRIPMSTFFPIFKSARNDISILVGPPNWEGLLSVKGAHFITADKIGKGPASFYTLEKGEWMCHSATIDGAHHQFVSVLCNTGPGYSGTGFWSSKNLLGVLKGFPLEEECNYNVMSVIPSIPGITSPNYVFESTAVKGRVFSDEAVKELEREASEAVKKLARFKSLTDKNWADDYDSDEDYGLEREAATNAPAEKTAQTNSAEKTAPSTSAEKTALTNKPFKWASGTVRQNKRQLRHPRRRYKRTTNGQNGRTDHHSYGGENQSLGDRGEDSEQGVSESPAEAQTKEARKAWREEQAKQFTSYFNAIYKWGAQEGGCPPGFRKCGHIPRYYHPRTRGETQWGQKLCQVHPELADKTAGFGWPKAGSEAELQSLNLQAARWLQRAESATIPGAEARKRVIEKTVEAYRNCVTNAPLCSLKSKLDWAGFQQDIREAVQSLELDAGVGIPYIAYGLPAHRGWVEDHKLLPVLTQLTFDRLQKMSEASFEDMSAEELVQEGLCDPIRLFVKGEPHKQSKLDEGRYRLIMSVSLVDQLVARVLFQNQNKREISLWRSVPSKPGFGLSTDTQTAEFLECLQKVSGAPSVEELCANHKEYTRPTDCSGFDWSVAYWMLEDDMEVRNRLTFNNTQLTKRLRAAWLKCIGNSVLCLSDGTLLAQTVPGVQKSGSYNTSSSNSRIRVMAAYHCGADWAMAMGDDALEAPNSDLEEYKTLGFKVEVGRELEFCSHIFRNPTLAVPVNTNKMLYKLIHGYNPECGNPEVIQNYLAAVFSVLQELRHDRELVAKLHQWLVPSATTKEH.

Residues 1–20 (MNRFTAYAALFFMFSLCSTA) form the signal peptide. A run of 3 helical transmembrane segments spans residues 121–141 (AASVTLWAIINIWFGLYWTLA), 144–164 (ITLFLWTFSIEALCLILLGCI), and 172–192 (ALSLSEHLPVFLFMSPLKIIW). A Peptidase S39 domain is found at 207–399 (VEGYKGFSVP…GITSPNYVFE (193 aa)). Catalysis depends on for protease activity residues histidine 255, aspartate 286, and serine 354. The disordered stretch occupies residues 455–560 (ATNAPAEKTA…QTKEARKAWR (106 aa)). Polar residues predominate over residues 463–484 (TAQTNSAEKTAPSTSAEKTALT). The span at 497-511 (QNKRQLRHPRRRYKR) shows a compositional bias: basic residues. The segment covering 551–560 (QTKEARKAWR) has biased composition (basic and acidic residues). One can recognise a RdRp catalytic domain in the interval 859-974 (EYTRPTDCSG…APNSDLEEYK (116 aa)).

Specific enzymatic cleavages in vivo yield mature proteins. The protease probably cleaves itself and releases the RdRp (Potential). Cleavages have been shown in the P1 protein, but since the N-terminus containing the serine protease is shared between P1 and P1-P2, cleavages should also occur within the P1-P2 protein.

The protein localises to the membrane. The enzyme catalyses RNA(n) + a ribonucleoside 5'-triphosphate = RNA(n+1) + diphosphate. Precursor from which the RNA-dependent RNA polymerase (RdRp) is probably released. RNA-dependent RNA polymerase plays an essential role in virus replication (Potential). This is Protein P1-P2 from Potato leafroll virus (strain Potato/Scotland/strain 1/1984) (PLrV).